The chain runs to 176 residues: MGPAEAGRRGAASPVPPPLVRVAPSLFLGSARAAGAEEQLARAGVTLCVNVSRQQPGPRAPGVAELRVPVFDDPAEDLLAHLEPTCAAMEAAVRAGGACLVYCKNGRSRSAAVCTAYLMRHRGLSLAKAFQMVKSARPVAEPNPGFWSQLQKYEEALQAQSCLQGEPPALGLGPEA.

One can recognise a Tyrosine-protein phosphatase domain in the interval 17 to 159; it reads PPLVRVAPSL…LQKYEEALQA (143 aa). The Phosphocysteine intermediate role is filled by C103.

The protein belongs to the protein-tyrosine phosphatase family. Non-receptor class dual specificity subfamily. As to quaternary structure, monomer.

It carries out the reaction O-phospho-L-tyrosyl-[protein] + H2O = L-tyrosyl-[protein] + phosphate. The catalysed reaction is O-phospho-L-seryl-[protein] + H2O = L-seryl-[protein] + phosphate. The enzyme catalyses O-phospho-L-threonyl-[protein] + H2O = L-threonyl-[protein] + phosphate. Functionally, has phosphatase activity with the synthetic substrate 6,8-difluoro-4-methylumbelliferyl phosphate (in vitro). Has almost no detectable activity with phosphotyrosine, even less activity with phosphothreonine and displays complete lack of activity with phosphoserine. The poor activity with phosphotyrosine may be due to steric hindrance by bulky amino acid sidechains that obstruct access to the active site. This Homo sapiens (Human) protein is Dual specificity phosphatase 28 (DUSP28).